The primary structure comprises 687 residues: MGNGERPPARRPDSSGSPPPAADAPAASNHPFSSHDTKHMTSRRLASRTAVAASLSALMLAACGGDDSANAPTAGGAAPLTPAVASPAGPTGSTPGSTPGATTAPAPSSTSAGQLSVDKMAFAQTHVVPSGGLSWTLPNASASLRPISRRDALVLVAIGQADAVQPVLEAWKDGAKLGALALSPPSALPPTESGGRAYANDRWSAVVPAAWMVPGVSFSVSASNYTSSVAQAPVFGTDADVQLTILPFYLFGADDTNSPPLSTTQAPDAATQQEIFAKWPTAELKVRTHPAGRFSLATVVVGPRADRTGAAQPAYPVTALDQQKDGYGVMSAMLTLITNMRTANGDGPLNNQYYAPLIALNSNGQFANLGGGLGGVGSGAAVGDHRYTGIFIHEQGHAFGLNHAGDEYAKGAYPYAGGSLSGSVWGYDPNHREFLDVLVPTTASSYAKCASSHQLDAQGRCYKQDPMQGGAGDQSSGYKFATFSDYNTGRMQAWIASRVLADPASSTGYSKWDSAAQARAPYTPTTDNNGLYGVNQNLPVQAGVPVHTIVVSFSKAGSAGASYIYPPFSYTGNLIATFDPTSAADRQAITVDKGTYPWYCKGTGCDYTLRVTYADGSRTYRVLQGGFRAWWTPTVDDANATNPLSGSSFRVWAINVPGDKRIGKIELLDTPMVWNGMPANPTVLLSR.

2 disordered regions span residues 1–45 and 73–112; these read MGNG…SRRL and TAGG…STSA. Positions 233 to 501 constitute a Peptidase M66 domain; sequence PVFGTDADVQ…QAWIASRVLA (269 aa). Residue His-393 participates in Zn(2+) binding. Residue Glu-394 is part of the active site. Residues His-397 and His-403 each contribute to the Zn(2+) site.

The protein belongs to the dictomallein family. The cofactor is Zn(2+).

This is Dictomallein (dtmL) from Burkholderia pseudomallei (strain 1710b).